The primary structure comprises 535 residues: Probable glucomannan 4-beta-mannosyltransferase 14 (535 aa).

A helical membrane pass occupies residues 42–62 (QVVSVLLFVDAAYMAIVVAIV). Residue Asp131 is part of the active site. Positions 193 and 195 each coordinate substrate. The active site involves Asp287. A run of 4 helical transmembrane segments spans residues 366 to 386 (IVVH…TVIF), 403 to 423 (ITIL…YWIL), 482 to 502 (IMVG…GRTY), and 503 to 523 (LYVY…GYVG).

The protein belongs to the glycosyltransferase 2 family. Plant cellulose synthase-like A subfamily.

It is found in the golgi apparatus membrane. The catalysed reaction is GDP-mannose + (glucomannan)n = GDP + (glucomannan)n+1.. Probable mannan synthase which consists of a 4-beta-mannosyltransferase activity on mannan using GDP-mannose. The beta-1,4-mannan product is the backbone for galactomannan synthesis by galactomannan galactosyltransferase. Galactomannan is a noncellulosic polysaccharides of plant cell wall. This chain is Probable glucomannan 4-beta-mannosyltransferase 14, found in Arabidopsis thaliana (Mouse-ear cress).